A 231-amino-acid polypeptide reads, in one-letter code: Monothiol glutaredoxin-6 (231 aa).

The first 29 residues, 1–29, serve as a signal peptide directing secretion; that stretch reads MIPSNKRNARILSITTLLLLLVFFVAQNA. Residues 116–219 form the Glutaredoxin domain; it reads QKEYSLILDL…ESLQVWSDGK (104 aa). Cys136 contributes to the [2Fe-2S] cluster binding site.

It belongs to the glutaredoxin family. Monothiol subfamily.

It is found in the vacuole. This Saccharomyces cerevisiae (strain ATCC 204508 / S288c) (Baker's yeast) protein is Monothiol glutaredoxin-6 (GRX6).